A 245-amino-acid chain; its full sequence is Carboxymethylenebutenolidase homolog (245 aa).

Position 2 is an N-acetylalanine (Ala-2). Residues Cys-132, Asp-179, and His-212 contribute to the active site. Ser-223 is modified (phosphoserine).

Belongs to the dienelactone hydrolase family.

It is found in the cytoplasm. The protein localises to the cytosol. Its function is as follows. Cysteine hydrolase. This Mus musculus (Mouse) protein is Carboxymethylenebutenolidase homolog (Cmbl).